A 352-amino-acid chain; its full sequence is Eukaryotic translation initiation factor 3 subunit H (352 aa).

Residues 1-34 form a disordered region; sequence MASRKEGTGSTATSSSSTGGAVGKGKGKGGSGDS. Ser-3 is modified (phosphoserine). Over residues 8–19 the composition is skewed to low complexity; sequence TGSTATSSSSTG. A compositionally biased stretch (gly residues) spans 20 to 32; sequence GAVGKGKGKGGSG. The MPN domain occupies 39–173; that stretch reads VQIDGLVVLK…LKAYRLTPKL (135 aa). Ser-183 is subject to Phosphoserine. A disordered region spans residues 265–300; that stretch reads RNSSKQQQQKHQYQQRRQQENMQRQSRGEPPLPEED. Positions 270–289 are enriched in low complexity; the sequence is QQQQKHQYQQRRQQENMQRQ. Residue Lys-303 forms a Glycyl lysine isopeptide (Lys-Gly) (interchain with G-Cter in SUMO2) linkage.

The protein belongs to the eIF-3 subunit H family. In terms of assembly, component of the eukaryotic translation initiation factor 3 (eIF-3) complex, which is composed of 13 subunits: EIF3A, EIF3B, EIF3C, EIF3D, EIF3E, EIF3F, EIF3G, EIF3H, EIF3I, EIF3J, EIF3K, EIF3L and EIF3M. The eIF-3 complex appears to include 3 stable modules: module A is composed of EIF3A, EIF3B, EIF3G and EIF3I; module B is composed of EIF3F, EIF3H, and EIF3M; and module C is composed of EIF3C, EIF3D, EIF3E, EIF3K and EIF3L. EIF3C of module C binds EIF3B of module A and EIF3H of module B, thereby linking the three modules. EIF3J is a labile subunit that binds to the eIF-3 complex via EIF3B. The eIF-3 complex interacts with RPS6KB1 under conditions of nutrient depletion. Mitogenic stimulation leads to binding and activation of a complex composed of MTOR and RPTOR, leading to phosphorylation and release of RPS6KB1 and binding of EIF4B to eIF-3. Interacts with RNF139; the interaction leads to protein translation inhibitions in a ubiquitination-dependent manner. Interacts with DHX33; the interaction is independent of RNA.

The protein localises to the cytoplasm. In terms of biological role, component of the eukaryotic translation initiation factor 3 (eIF-3) complex, which is required for several steps in the initiation of protein synthesis. The eIF-3 complex associates with the 40S ribosome and facilitates the recruitment of eIF-1, eIF-1A, eIF-2:GTP:methionyl-tRNAi and eIF-5 to form the 43S pre-initiation complex (43S PIC). The eIF-3 complex stimulates mRNA recruitment to the 43S PIC and scanning of the mRNA for AUG recognition. The eIF-3 complex is also required for disassembly and recycling of post-termination ribosomal complexes and subsequently prevents premature joining of the 40S and 60S ribosomal subunits prior to initiation. The eIF-3 complex specifically targets and initiates translation of a subset of mRNAs involved in cell proliferation, including cell cycling, differentiation and apoptosis, and uses different modes of RNA stem-loop binding to exert either translational activation or repression. This chain is Eukaryotic translation initiation factor 3 subunit H (Eif3h), found in Rattus norvegicus (Rat).